We begin with the raw amino-acid sequence, 126 residues long: C-type natriuretic peptide (126 aa).

An N-terminal signal peptide occupies residues M1–A23. Positions P20–R73 are disordered. Residues K24 to R73 constitute a propeptide that is removed on maturation. Residues G26–P35 are compositionally biased toward pro residues. An intrachain disulfide couples C110 to C126.

This sequence belongs to the natriuretic peptide family. Degraded by IDE (in vitro).

It is found in the secreted. Its function is as follows. Hormone which plays a role in endochondral ossification through regulation of cartilaginous growth plate chondrocytes proliferation and differentiation. May also be vasoactive and natriuretic. Acts by specifically binding and stimulating NPR2 to produce cGMP. Binds the clearance receptor NPR3. This Mus musculus (Mouse) protein is C-type natriuretic peptide (Nppc).